Consider the following 198-residue polypeptide: Proteasome subunit beta type-4 (198 aa).

N-acetylmethionine is present on Met1. Phosphoserine is present on Ser76.

Belongs to the peptidase T1B family. The 26S proteasome consists of a 20S proteasome core and two 19S regulatory subunits. The 20S proteasome core is composed of 28 subunits that are arranged in four stacked rings, resulting in a barrel-shaped structure. The two end rings are each formed by seven alpha subunits, and the two central rings are each formed by seven beta subunits. The catalytic chamber with the active sites is on the inside of the barrel.

The protein resides in the cytoplasm. It localises to the nucleus. Its function is as follows. Non-catalytic component of the proteasome which degrades poly-ubiquitinated proteins in the cytoplasm and in the nucleus. It is essential for the regulated turnover of proteins and for the removal of misfolded proteins. The proteasome is a multicatalytic proteinase complex that is characterized by its ability to cleave peptides with Arg, Phe, Tyr, Leu, and Glu adjacent to the leaving group at neutral or slightly basic pH. It has an ATP-dependent proteolytic activity. This subunit has a chymotrypsin-like activity. The sequence is that of Proteasome subunit beta type-4 (PRE1) from Saccharomyces cerevisiae (strain ATCC 204508 / S288c) (Baker's yeast).